Consider the following 283-residue polypeptide: Pantothenate synthetase 2 (283 aa).

Position 34–41 (34–41 (MGALHDGH)) interacts with ATP. Histidine 41 acts as the Proton donor in catalysis. Residue glutamine 65 participates in (R)-pantoate binding. A beta-alanine-binding site is contributed by glutamine 65. 152-155 (GEKD) is an ATP binding site. Position 158 (glutamine 158) interacts with (R)-pantoate. Residues valine 181 and 189–192 (MSSR) contribute to the ATP site.

It belongs to the pantothenate synthetase family. In terms of assembly, homodimer.

Its subcellular location is the cytoplasm. It carries out the reaction (R)-pantoate + beta-alanine + ATP = (R)-pantothenate + AMP + diphosphate + H(+). It participates in cofactor biosynthesis; (R)-pantothenate biosynthesis; (R)-pantothenate from (R)-pantoate and beta-alanine: step 1/1. In terms of biological role, catalyzes the condensation of pantoate with beta-alanine in an ATP-dependent reaction via a pantoyl-adenylate intermediate. This is Pantothenate synthetase 2 from Bradyrhizobium diazoefficiens (strain JCM 10833 / BCRC 13528 / IAM 13628 / NBRC 14792 / USDA 110).